We begin with the raw amino-acid sequence, 276 residues long: Undecaprenyl-diphosphatase (276 aa).

The next 8 helical transmembrane spans lie at 1-21 (MSWL…FLPV), 39-59 (AGAS…LVYF), 84-104 (YRLG…GLLL), 115-135 (LWAI…AEYF), 159-179 (LALL…LFLG), 190-210 (FLLA…DAFA), 222-242 (QLLV…AWFL), and 253-273 (FVGY…TGVV).

It belongs to the UppP family.

It localises to the cell membrane. It carries out the reaction di-trans,octa-cis-undecaprenyl diphosphate + H2O = di-trans,octa-cis-undecaprenyl phosphate + phosphate + H(+). Its function is as follows. Catalyzes the dephosphorylation of undecaprenyl diphosphate (UPP). Confers resistance to bacitracin. The chain is Undecaprenyl-diphosphatase from Mycobacterium sp. (strain KMS).